The primary structure comprises 426 residues: Glutamate-1-semialdehyde 2,1-aminomutase (426 aa).

Position 265 is an N6-(pyridoxal phosphate)lysine (Lys265).

It belongs to the class-III pyridoxal-phosphate-dependent aminotransferase family. HemL subfamily. Homodimer. Pyridoxal 5'-phosphate is required as a cofactor.

The protein resides in the cytoplasm. The enzyme catalyses (S)-4-amino-5-oxopentanoate = 5-aminolevulinate. It participates in porphyrin-containing compound metabolism; protoporphyrin-IX biosynthesis; 5-aminolevulinate from L-glutamyl-tRNA(Glu): step 2/2. In Hydrogenovibrio crunogenus (strain DSM 25203 / XCL-2) (Thiomicrospira crunogena), this protein is Glutamate-1-semialdehyde 2,1-aminomutase.